We begin with the raw amino-acid sequence, 320 residues long: Short-chain dehydrogenase TIC 32 A, chloroplastic (320 aa).

NADP(+) is bound by residues 40–46 (GGTSGIG), 92–93 (DL), N119, and T140. Residue S174 coordinates substrate. Y196 functions as the Proton acceptor in the catalytic mechanism. The interaction with calmodulin stretch occupies residues 301–317 (DTTLADKLWDFSIKLVE).

Belongs to the short-chain dehydrogenases/reductases (SDR) family. As to quaternary structure, part of the Tic complex. In terms of tissue distribution, expressed in the dehiscence zone of developing pods.

Its subcellular location is the plastid. The protein localises to the chloroplast inner membrane. In terms of biological role, involved in protein precursor import into chloroplasts. Maybe involved in pod abscission or dehiscence (pod shatter). This chain is Short-chain dehydrogenase TIC 32 A, chloroplastic, found in Brassica napus (Rape).